Reading from the N-terminus, the 277-residue chain is Bifunctional protein FolD (277 aa).

Residues 160–162 (GAS), S185, and I226 contribute to the NADP(+) site.

This sequence belongs to the tetrahydrofolate dehydrogenase/cyclohydrolase family. Homodimer.

It carries out the reaction (6R)-5,10-methylene-5,6,7,8-tetrahydrofolate + NADP(+) = (6R)-5,10-methenyltetrahydrofolate + NADPH. The enzyme catalyses (6R)-5,10-methenyltetrahydrofolate + H2O = (6R)-10-formyltetrahydrofolate + H(+). It functions in the pathway one-carbon metabolism; tetrahydrofolate interconversion. Functionally, catalyzes the oxidation of 5,10-methylenetetrahydrofolate to 5,10-methenyltetrahydrofolate and then the hydrolysis of 5,10-methenyltetrahydrofolate to 10-formyltetrahydrofolate. This chain is Bifunctional protein FolD, found in Ruthia magnifica subsp. Calyptogena magnifica.